An 823-amino-acid chain; its full sequence is Putative ankyrin repeat domain-containing protein 20A4 (823 aa).

ANK repeat units lie at residues 66–95 (QHRTALHLACASGHVQVVTLLVNRKCQIDV), 99–128 (ENRTPLIQAVHCQEEACAVILLEHGANPNL), 132–161 (YGNTALHYAVYSESTSLAEKLLSHGAHIEA), 165–194 (DNNTPLLFAIICKKEKMVEFLLKKKASSHA), and 198–227 (LRRSALMLAVYYDSPGIVNILLKQNIDVFA). Disordered regions lie at residues 301–343 (VPEK…EVED) and 356–405 (QTLR…NICD). A compositionally biased stretch (basic and acidic residues) spans 371-384 (EQQRHERSEKKQPQ). 3 coiled-coil regions span residues 431–480 (KKLK…KQLE), 565–724 (EMIT…NNST), and 776–806 (FVLEEKSKKLMNECDHLKESLFQYEREKTEV).

The protein is Putative ankyrin repeat domain-containing protein 20A4 of Homo sapiens (Human).